The sequence spans 205 residues: Transmembrane emp24 domain-containing protein A (205 aa).

A signal peptide spans 1–24 (MMNNKLLLLVIALLCIASNSIVES). Residues 25-172 (FSFKVSAKVE…RNTAESTNSR (148 aa)) lie on the Lumenal side of the membrane. The GOLD domain maps to 34-116 (EECIYEEIGV…DKTVSFILSV (83 aa)). A helical membrane pass occupies residues 173-193 (VLWWSVFEAFVLIALSIWQIY). Residues 194 to 205 (YLRRFFEVKRAV) are Cytoplasmic-facing.

The protein belongs to the EMP24/GP25L family.

The protein localises to the cytoplasmic vesicle membrane. Its function is as follows. Could have a role in the budding of coatomer-coated and other species of coated vesicles. This Dictyostelium discoideum (Social amoeba) protein is Transmembrane emp24 domain-containing protein A (empA).